Here is a 204-residue protein sequence, read N- to C-terminus: ATP phosphoribosyltransferase (204 aa).

Belongs to the ATP phosphoribosyltransferase family. Short subfamily. Heteromultimer composed of HisG and HisZ subunits.

It is found in the cytoplasm. It catalyses the reaction 1-(5-phospho-beta-D-ribosyl)-ATP + diphosphate = 5-phospho-alpha-D-ribose 1-diphosphate + ATP. The protein operates within amino-acid biosynthesis; L-histidine biosynthesis; L-histidine from 5-phospho-alpha-D-ribose 1-diphosphate: step 1/9. In terms of biological role, catalyzes the condensation of ATP and 5-phosphoribose 1-diphosphate to form N'-(5'-phosphoribosyl)-ATP (PR-ATP). Has a crucial role in the pathway because the rate of histidine biosynthesis seems to be controlled primarily by regulation of HisG enzymatic activity. This chain is ATP phosphoribosyltransferase, found in Staphylococcus aureus (strain bovine RF122 / ET3-1).